We begin with the raw amino-acid sequence, 397 residues long: Riboflavin biosynthesis protein RibBA (397 aa).

The interval 1–199 is DHBP synthase; the sequence is MFHRIEEALE…IEDLIAYRRH (199 aa). Residues 26 to 27, D31, 138 to 142, and E162 each bind D-ribulose 5-phosphate; these read RE and RAGHT. E27 is a Mg(2+) binding site. A Mg(2+)-binding site is contributed by H141. The tract at residues 200–397 is GTP cyclohydrolase II; that stretch reads HETLVTREVE…VNKLGHLLNL (198 aa). 250 to 254 serves as a coordination point for GTP; the sequence is RVHSE. C255, C266, and C268 together coordinate Zn(2+). Residues Q271, 293–295, and T315 contribute to the GTP site; that span reads EGR. Residue D327 is the Proton acceptor; for GTP cyclohydrolase activity of the active site. Residue R329 is the Nucleophile; for GTP cyclohydrolase activity of the active site. Positions 350 and 355 each coordinate GTP.

The protein in the N-terminal section; belongs to the DHBP synthase family. This sequence in the C-terminal section; belongs to the GTP cyclohydrolase II family. Mg(2+) is required as a cofactor. Requires Mn(2+) as cofactor. The cofactor is Zn(2+).

The catalysed reaction is D-ribulose 5-phosphate = (2S)-2-hydroxy-3-oxobutyl phosphate + formate + H(+). It catalyses the reaction GTP + 4 H2O = 2,5-diamino-6-hydroxy-4-(5-phosphoribosylamino)-pyrimidine + formate + 2 phosphate + 3 H(+). The protein operates within cofactor biosynthesis; riboflavin biosynthesis; 2-hydroxy-3-oxobutyl phosphate from D-ribulose 5-phosphate: step 1/1. Its pathway is cofactor biosynthesis; riboflavin biosynthesis; 5-amino-6-(D-ribitylamino)uracil from GTP: step 1/4. Functionally, catalyzes the conversion of D-ribulose 5-phosphate to formate and 3,4-dihydroxy-2-butanone 4-phosphate. Catalyzes the conversion of GTP to 2,5-diamino-6-ribosylamino-4(3H)-pyrimidinone 5'-phosphate (DARP), formate and pyrophosphate. The polypeptide is Riboflavin biosynthesis protein RibBA (Bacillus cereus (strain G9842)).